We begin with the raw amino-acid sequence, 423 residues long: Diels-Alderase pyiF (423 aa).

An N-terminal signal peptide occupies residues 1–17; that stretch reads MLPSFIFVYSLLATATA. Residues asparagine 60, asparagine 92, and asparagine 219 are each glycosylated (N-linked (GlcNAc...) asparagine).

This sequence belongs to the Diels-Alderase family.

It functions in the pathway mycotoxin biosynthesis. Its function is as follows. Diels-Alderase; part of the gene cluster that mediates the biosynthesis of the mycotoxin pyrichalasin H, a tyrosine-derived cytochalasan that inhibits the growth of rice seedlings, but also inhibits lymphocyte capping and actin polymerization and alters cell morphology. Pyrichalasin H is indicated as the responsible agent for the genus-specific pathogenicity of M.grisea toward crabgrass. The first step in the pathway is catalyzed by the O-methyltransferase pyiA which methylates free tyrosine to generate the precursor O-methyltyrosine. The hybrid PKS-NRPS pyiS, assisted by the enoyl reductase pyiC, are responsible for fusion of the O-methyltyrosine precursor and the polyketide backbone. The polyketide synthase module (PKS) of pyiS is responsible for the synthesis of the polyketide backbone and the downstream nonribosomal peptide synthetase (NRPS) amidates the carboxyl end of the polyketide with the O-methyltyrosine precursor. As the NRPS A-domain demonstrates substrate tolerance, pyiS can also use phenylalanine, tyrosine and even para-chlorophenylalanine as amino acid precursor, which leads to the production of novel cytochalasans, including halogenated cytochalasans. Because pyiS lacks a designated enoylreductase (ER) domain, the required activity is provided the enoyl reductase pyiC. Reduction by the hydrolyase pyiE leads to 1,5-dihydropyrrolone, which is substrate for dehydration and intra-molecular Diels-Alder cyclization by the Diels-Alderase pyiF to yield the required isoindolone-fused macrocycle. The tailoring cytochrome P450 monooxygenases piyD and piyG catalyze the hydroxylation at C-18 and C-7, respectivily, whereas the short-chain dehydrogenase/reductase pyiH reduces the carbonyl at C-21 in preparation for the transfer of an acetyl group by the acetyltransferase pyiB. These 3 reactions whose order is not clear yet, lead to the production of O-methylpyrichalasin J, a deacetylated pyrichalasin H. Finally, pyiB to converts O-methylpyrichalasin J into the final product pyrichalasin H via acetylation of C-21. This chain is Diels-Alderase pyiF, found in Pyricularia grisea (Crabgrass-specific blast fungus).